The primary structure comprises 486 residues: Cardiolipin synthase A (486 aa).

2 helical membrane-spanning segments follow: residues Thr3–Val23 and Met38–Val58. 2 consecutive PLD phosphodiesterase domains span residues Met219–Arg246 and Glu399–Ser426. Catalysis depends on residues His224, Lys226, Asp231, His404, Lys406, and Asp411.

This sequence belongs to the phospholipase D family. Cardiolipin synthase subfamily. ClsA sub-subfamily.

It is found in the cell inner membrane. The enzyme catalyses 2 a 1,2-diacyl-sn-glycero-3-phospho-(1'-sn-glycerol) = a cardiolipin + glycerol. Catalyzes the reversible phosphatidyl group transfer from one phosphatidylglycerol molecule to another to form cardiolipin (CL) (diphosphatidylglycerol) and glycerol. The sequence is that of Cardiolipin synthase A from Escherichia coli O7:K1 (strain IAI39 / ExPEC).